Consider the following 570-residue polypeptide: Periplasmic trehalase (570 aa).

The signal sequence occupies residues 1–34; the sequence is MIPPEIRRSVLLQKAIKLALAGTLLTFASFSATA. Substrate contacts are provided by residues R159, 166 to 167, N203, 212 to 214, 284 to 286, and G317; these read WD, RSQ, and RPE. Catalysis depends on proton donor/acceptor residues D319 and E503. Substrate is bound at residue E518. A disordered region spans residues 544 to 570; it reads KPCDSVPSTRPASLSATPTKTPSAATQ. Low complexity predominate over residues 554-570; it reads PASLSATPTKTPSAATQ.

Belongs to the glycosyl hydrolase 37 family. Monomer.

The protein resides in the periplasm. The catalysed reaction is alpha,alpha-trehalose + H2O = alpha-D-glucose + beta-D-glucose. In terms of biological role, provides the cells with the ability to utilize trehalose at high osmolarity by splitting it into glucose molecules that can subsequently be taken up by the phosphotransferase-mediated uptake system. The chain is Periplasmic trehalase from Salmonella typhimurium (strain LT2 / SGSC1412 / ATCC 700720).